A 281-amino-acid polypeptide reads, in one-letter code: NADPH-dependent 7-cyano-7-deazaguanine reductase (281 aa).

A substrate-binding site is contributed by 88–90; sequence IES. 90–91 serves as a coordination point for NADPH; that stretch reads SK. Catalysis depends on Cys-189, which acts as the Thioimide intermediate. Asp-196 (proton donor) is an active-site residue. 228–229 provides a ligand contact to substrate; it reads HE. 257 to 258 provides a ligand contact to NADPH; it reads RG.

It belongs to the GTP cyclohydrolase I family. QueF type 2 subfamily. Homodimer.

The protein localises to the cytoplasm. The catalysed reaction is 7-aminomethyl-7-carbaguanine + 2 NADP(+) = 7-cyano-7-deazaguanine + 2 NADPH + 3 H(+). Its pathway is tRNA modification; tRNA-queuosine biosynthesis. Catalyzes the NADPH-dependent reduction of 7-cyano-7-deazaguanine (preQ0) to 7-aminomethyl-7-deazaguanine (preQ1). This chain is NADPH-dependent 7-cyano-7-deazaguanine reductase, found in Yersinia pestis bv. Antiqua (strain Antiqua).